The chain runs to 290 residues: 33 kDa chaperonin (290 aa).

Disulfide bonds link Cys-235–Cys-237 and Cys-268–Cys-271.

Belongs to the HSP33 family. Under oxidizing conditions two disulfide bonds are formed involving the reactive cysteines. Under reducing conditions zinc is bound to the reactive cysteines and the protein is inactive.

It localises to the cytoplasm. Functionally, redox regulated molecular chaperone. Protects both thermally unfolding and oxidatively damaged proteins from irreversible aggregation. Plays an important role in the bacterial defense system toward oxidative stress. The protein is 33 kDa chaperonin of Streptococcus pyogenes serotype M49 (strain NZ131).